We begin with the raw amino-acid sequence, 389 residues long: NADH-quinone oxidoreductase subunit D (389 aa).

This sequence belongs to the complex I 49 kDa subunit family. As to quaternary structure, NDH-1 is composed of 14 different subunits. Subunits NuoB, C, D, E, F, and G constitute the peripheral sector of the complex.

It is found in the cell inner membrane. The enzyme catalyses a quinone + NADH + 5 H(+)(in) = a quinol + NAD(+) + 4 H(+)(out). In terms of biological role, NDH-1 shuttles electrons from NADH, via FMN and iron-sulfur (Fe-S) centers, to quinones in the respiratory chain. The immediate electron acceptor for the enzyme in this species is believed to be ubiquinone. Couples the redox reaction to proton translocation (for every two electrons transferred, four hydrogen ions are translocated across the cytoplasmic membrane), and thus conserves the redox energy in a proton gradient. This is NADH-quinone oxidoreductase subunit D from Rickettsia prowazekii (strain Madrid E).